Consider the following 160-residue polypeptide: Protein-export protein SecB (160 aa).

Belongs to the SecB family. In terms of assembly, homotetramer, a dimer of dimers. One homotetramer interacts with 1 SecA dimer.

It is found in the cytoplasm. Functionally, one of the proteins required for the normal export of preproteins out of the cell cytoplasm. It is a molecular chaperone that binds to a subset of precursor proteins, maintaining them in a translocation-competent state. It also specifically binds to its receptor SecA. This is Protein-export protein SecB from Burkholderia lata (strain ATCC 17760 / DSM 23089 / LMG 22485 / NCIMB 9086 / R18194 / 383).